Reading from the N-terminus, the 27-residue chain is Delta-conotoxin SuVIA (27 aa).

3 disulfide bridges follow: cysteine 1/cysteine 17, cysteine 8/cysteine 21, and cysteine 16/cysteine 25.

Belongs to the conotoxin O1 superfamily. As to expression, expressed by the venom duct, in the proximal part (indicative of a defensive role).

The protein resides in the secreted. Its function is as follows. This toxin activates voltage-gated sodium channels (Nav1.3/SCN3A (EC(50)=3.98 nM), Nav1.4/SCN4A (EC(50)=4.99 nM), Nav1.6/SCN8A (EC(50)=1.27 nM) and Nav1.7/SCN9A (EC(50)=2.42 nM)). It shifts the voltage-dependence of activation to more hyperpolarized potentials but has only little effect on channel inactivation. In vivo, it induces nocifensive or pain-like behaviors in mice when injected intraplantarly. This is coherent with the specific defensive role deduced from its proximal position in the venom gland. The protein is Delta-conotoxin SuVIA of Conus suturatus (Sutured cone).